A 601-amino-acid chain; its full sequence is Elongation factor 4 (601 aa).

The region spanning 6–188 is the tr-type G domain; it reads DHIRNFSIVA…AIVHQLPPPR (183 aa). GTP-binding positions include 18-23 and 135-138; these read DHGKST and NKVD.

It belongs to the TRAFAC class translation factor GTPase superfamily. Classic translation factor GTPase family. LepA subfamily.

It localises to the cell inner membrane. It catalyses the reaction GTP + H2O = GDP + phosphate + H(+). Required for accurate and efficient protein synthesis under certain stress conditions. May act as a fidelity factor of the translation reaction, by catalyzing a one-codon backward translocation of tRNAs on improperly translocated ribosomes. Back-translocation proceeds from a post-translocation (POST) complex to a pre-translocation (PRE) complex, thus giving elongation factor G a second chance to translocate the tRNAs correctly. Binds to ribosomes in a GTP-dependent manner. The chain is Elongation factor 4 from Mesorhizobium japonicum (strain LMG 29417 / CECT 9101 / MAFF 303099) (Mesorhizobium loti (strain MAFF 303099)).